Reading from the N-terminus, the 292-residue chain is Zinc finger protein OZF (292 aa).

10 consecutive C2H2-type zinc fingers follow at residues 16–38 (FACK…EHFH), 44–66 (FECN…QNTH), 72–94 (LECN…QKIH), 100–122 (FECK…QRTH), 128–150 (FICK…EKIH), 156–178 (FKCN…QNIH), 184–206 (YECN…VRIH), 212–234 (YECN…VRSH), 240–262 (YGCN…LRIH), and 268–290 (YQCS…QKIH). Glycyl lysine isopeptide (Lys-Gly) (interchain with G-Cter in SUMO2) cross-links involve residues K28, K51, and K56. Glycyl lysine isopeptide (Lys-Gly) (interchain with G-Cter in SUMO) cross-links involve residues K157 and K169. A Glycyl lysine isopeptide (Lys-Gly) (interchain with G-Cter in SUMO2) cross-link involves residue K173. The interval 212-292 (YECNVCGKAF…HIRHQKIHTH (81 aa)) is interaction with TERF2IP.

The protein belongs to the krueppel C2H2-type zinc-finger protein family. Binds DNA. Interacts with SUMO conjugating enzyme UBC9/UBE2I. Interacts with the telomeric protein TERF2IP.

It is found in the nucleus. This Bos taurus (Bovine) protein is Zinc finger protein OZF (ZNF146).